Reading from the N-terminus, the 25-residue chain is Glucomannokinase (25 aa).

The protein belongs to the ROK (NagC/XylR) family. In terms of assembly, homodimer.

It carries out the reaction D-glucose + ATP = D-glucose 6-phosphate + ADP + H(+). It catalyses the reaction D-mannose + ATP = D-mannose 6-phosphate + ADP + H(+). It functions in the pathway carbohydrate degradation; glycolysis; D-glyceraldehyde 3-phosphate and glycerone phosphate from D-glucose: step 1/4. Its pathway is carbohydrate metabolism; mannose metabolism. With respect to regulation, competitively inhibited by 2-deoxy-glucose. In terms of biological role, the enzyme has great affinity for glucose and mannose. This is Glucomannokinase from Segatella bryantii (Prevotella bryantii).